The chain runs to 439 residues: MVTKHQIEEDHLDGATTDPEVKRVKLENNVEEIQPEQAETNKQEGTDKENKGKFEKETERIGGSEVVTDVEKGIVKFEFDGVEYTFKERPSVVEENEGKIEFRVVNNDNTKENMMVLTGLKNIFQKQLPKMPKEYIARLVYDRSHLSMAVIRKPLTVVGGITYRPFDKREFAEIVFCAISSTEQVRGYGAHLMNHLKDYVRNTSNIKYFLTYADNYAIGYFKKQGFTKEITLDKSIWMGYIKDYEGGTLMQCSMLPRIRYLDAGKILLLQEAALRRKIRTISKSHIVRPGLEQFKDLNNIKPIDPMTIPGLKEAGWTPEMDALAQRPKRGPHDAAIQNILTELQNHAAAWPFLQPVNKEEVPDYYDFIKEPMDLSTMEIKLESNKYQKMEDFIYDARLVFNNCRMYNGENTSYYKYANRLEKFFNNKVKEIPEYSHLID.

Basic and acidic residues-rich tracts occupy residues 1–28 and 39–59; these read MVTK…KLEN and ETNK…KETE. The disordered stretch occupies residues 1–59; the sequence is MVTKHQIEEDHLDGATTDPEVKRVKLENNVEEIQPEQAETNKQEGTDKENKGKFEKETE. Residues 100–255 form the N-acetyltransferase domain; the sequence is IEFRVVNNDN…GGTLMQCSML (156 aa). E173 functions as the Proton donor/acceptor in the catalytic mechanism. Residues 177–179, 184–190, and 216–219 each bind acetyl-CoA; these read CAI, QVRGYGA, and YAIG. A Bromo domain is found at 327–431; it reads PKRGPHDAAI…KFFNNKVKEI (105 aa).

It belongs to the acetyltransferase family. GCN5 subfamily. In terms of assembly, component of the 1.8 MDa SAGA (Spt-Ada-Gcn5 acetyltransferase) complex, which is composed of 19 subunits TRA1, SPT7, TAF5, NGG1/ADA3, SGF73, SPT20/ADA5, SPT8, TAF12, TAF6, HFI1/ADA1, UBP8, GCN5, ADA2, SPT3, SGF29, TAF10, TAF9, SGF11 and SUS1. The SAGA complex is composed of 4 modules, namely the HAT (histone acetyltransferase) module (GCN5, ADA2, NGG1/ADA3 and SGF29), the DUB (deubiquitinating) module (UBP8, SGF11, SGF73 and SUS1), the core or TAF (TBP-associated factor) module (TAF5, TAF6, TAF9, TAF10 and TAF12), and the Tra1 or SPT (Suppressor of Ty) module (TRA1, HFI1/ADA1, SPT3, SPT7, SPT8 and SPT20/ADA5). The Tra1/SPT module binds activators, the core module recruits TBP (TATA-binding protein), the HAT module contains the histone H3 acetyltransferase GCN5, and the DUB module comprises the histone H2B deubiquitinase UBP8. Also identified in an altered form of SAGA, named SALSA (SAGA altered, Spt8 absent) or SLIK (SAGA-like) complex, which contains a C-terminal truncated form of SPT7 and is missing SPT8. However, it has been shown that the SAGA and SAGA-like SALSA/SLIK transcriptional coactivators are structurally and biochemically equivalent. Component of the 0.8 MDa ADA complex, a HAT complex distinct from SAGA, which at least consists of ADA2, NGG1/ADA3, AHC1, AHC2, SGF29 and GCN5. Component of an ADA/GCN5 complex that consists of HFI1/ADA1, ADA2, NGG1/ADA3, SPT20/ADA5 and GCN5 and probably is a subcomplex of SAGA.

The protein resides in the nucleus. The protein localises to the cytoplasm. It carries out the reaction L-lysyl-[protein] + acetyl-CoA = N(6)-acetyl-L-lysyl-[protein] + CoA + H(+). The catalysed reaction is (2E)-butenoyl-CoA + L-lysyl-[protein] = N(6)-(2E)-butenoyl-L-lysyl-[protein] + CoA + H(+). Functionally, histone acetyltransferase that acetylates histone H2B to form H2BK11ac and H2BK16ac, histone H3 to form H3K9ac, H3K14ac, H3K18ac, H3K23ac, H3K27ac and H3K36ac, with a lower preference histone H4 to form H4K8ac and H4K16ac, and contributes to H2A.Z acetylation. Acetylation of histones gives a specific tag for epigenetic transcription activation and elongation. Operates in concert with certain DNA-binding transcriptional activators such as GCN4 or HAP2/3/4. Its acetyltransferase activity seems to be dependent on the association in different multisubunit complexes. Component of the transcription coactivator SAGA complex. SAGA acts as a general cofactor required for essentially all RNA polymerase II transcription. At the promoters, SAGA is required for transcription pre-initiation complex (PIC) recruitment. It influences RNA polymerase II transcriptional activity through different activities such as TBP interaction (via core/TAF module) and promoter selectivity, interaction with transcription activators (via Tra1/SPT module), and chromatin modification through histone acetylation (via HAT module) and deubiquitination (via DUB module). SAGA preferentially acetylates histones H3 (to form H3K9ac, H3K14ac, H3K18ac and H3K23ac) and H2B and deubiquitinates histone H2B. SAGA interacts with DNA via upstream activating sequences (UASs). Also identified in a modified version of SAGA named SALSA or SLIK. The cleavage of SPT7 and the absence of the SPT8 subunit in SLIK neither drive any major conformational differences in its structure compared with SAGA, nor significantly affect HAT, DUB, or DNA-binding activities. Component of the ADA histone acetyltransferase complex, which preferentially acetylates nucleosomal histones H3 (to form H3K14ac and H3K18ac) and H2B. In addition to histone acetyltransferase, can use different acyl-CoA substrates, such as (2E)-butenoyl-CoA (crotonyl-CoA) and is able to mediate histone crotonylation. Controls the metaphase-to-anaphase transition and is required for correct chromosome segregation and centromere/kinetochore function in mitosis. May be involved in response to DNA damage by genotoxic agents. This chain is Histone acetyltransferase GCN5, found in Saccharomyces cerevisiae (strain ATCC 204508 / S288c) (Baker's yeast).